The chain runs to 913 residues: Rab GTPase-activating protein tbc-8 (913 aa).

The tract at residues 1–24 is disordered; sequence MQMFRHSSADMWRAKKPTLERRST. Residues 106–240 form the RUN domain; that stretch reads NLNSPYVTSL…TYRRMSNRIE (135 aa). Residues 597–844 form the Rab-GAP TBC domain; that stretch reads INTKEVRRMA…KVWEVIWAAQ (248 aa).

It belongs to the RUTBC family. As to quaternary structure, interacts with rab-19. Interacts with ric-19; the interaction is direct and may be required for the activation of rab-2 and dense vesicle maturation in cholinergic motoneurons. Interacts (via RUN domain) with rund-1. Does not interact with unc-108 (GTP-bound form). As to expression, expressed in neurons in the head, tail and ventral nerve cord (at protein level).

It localises to the golgi apparatus. It is found in the trans-Golgi network. Its subcellular location is the early endosome. The protein resides in the cytoplasmic vesicle membrane. Interacts with numerous Rab family members, functioning as Rab effector for some, and as GTPase activator for others. GTPase activator for rab-2. In association with ric-19 activates rab-2 during dense core vesicle maturation in cholinergic motoneurons. In Caenorhabditis elegans, this protein is Rab GTPase-activating protein tbc-8.